The sequence spans 315 residues: GPN-loop GTPase 2 (315 aa).

Position 12 to 17 (12 to 17) interacts with GTP; it reads GSGKST. Positions 69–71 match the Gly-Pro-Asn (GPN)-loop; involved in dimer interface motif; sequence GPN. 172–175 provides a ligand contact to GTP; it reads SKAD.

This sequence belongs to the GPN-loop GTPase family. In terms of assembly, heterodimers with gpn1 or fet5/gpn3. Binds to RNA polymerase II (RNAPII).

The protein resides in the cytoplasm. The protein localises to the nucleus. Its function is as follows. Small GTPase required for proper nuclear import of RNA polymerase II and III (RNAPII and RNAPIII). May act at an RNAP assembly step prior to nuclear import. This Schizosaccharomyces pombe (strain 972 / ATCC 24843) (Fission yeast) protein is GPN-loop GTPase 2.